Here is a 204-residue protein sequence, read N- to C-terminus: RNA-free ribonuclease P (204 aa).

Belongs to the HARP family.

It carries out the reaction Endonucleolytic cleavage of RNA, removing 5'-extranucleotides from tRNA precursor.. Its function is as follows. RNA-free RNase P that catalyzes the removal of the 5'-leader sequence from pre-tRNA to produce the mature 5'-terminus. This chain is RNA-free ribonuclease P, found in Pyrococcus abyssi (strain GE5 / Orsay).